The primary structure comprises 489 residues: CDK5RAP3 protein homolog (489 aa).

The protein belongs to the CDK5RAP3 family.

Functionally, substrate adapter of E3 ligase complexes mediating ufmylation, the covalent attachment of the ubiquitin-like modifier UFM1 to substrate proteins, and which is involved in various processes, such as ribosome recycling and reticulophagy (also called ER-phagy). This chain is CDK5RAP3 protein homolog, found in Caenorhabditis elegans.